We begin with the raw amino-acid sequence, 140 residues long: Small ribosomal subunit protein uS11 (140 aa).

The disordered stretch occupies residues 116-140 (GRVEDVTPIPHDGTRPKGGRRGRRV).

The protein belongs to the universal ribosomal protein uS11 family. In terms of assembly, part of the 30S ribosomal subunit.

Its function is as follows. Located on the platform of the 30S subunit. This is Small ribosomal subunit protein uS11 from Thermococcus kodakarensis (strain ATCC BAA-918 / JCM 12380 / KOD1) (Pyrococcus kodakaraensis (strain KOD1)).